Reading from the N-terminus, the 379-residue chain is MAPIIRKSHPLLKIINNSLIDLPSPSNISAWWNFGSLLGICLITQILTGLLLAMHYTADTSLAFSSIAHICRNVQYGWLIRNLHANGASFFFICIYFHIGRGFYYGSYLYKETWNTGIILLLTLMATAFVGYVLPWGQMSFWGATVITNLFSAIPYIGQTLVEWAWGGFSVDNPTLTRFFALHFLLPFLIAGITLIHLTFLHESGSNNPLGIISHCDKIPFHPYFSLKDILGFTLMLIPLLTLTFFSPNLLGDPENFTPANPLVTPPHIKPEWYFLFAYAILRSIPNKLGGVLALAASVLILFLTPLLHKSKQRSMAFRPFSQVLFWLLVANLLILTWVGSQPVEHPFIAIGQMASFTYFLILLVLFPMIGALENKMIY.

4 consecutive transmembrane segments (helical) span residues 34–54 (FGSLLGICLITQILTGLLLAM), 78–99 (WLIRNLHANGASFFFICIYFHI), 114–134 (WNTGIILLLTLMATAFVGYVL), and 179–199 (FFALHFLLPFLIAGITLIHLT). Heme b is bound by residues His84 and His98. Residues His183 and His197 each contribute to the heme b site. His202 is a binding site for a ubiquinone. 4 consecutive transmembrane segments (helical) span residues 227-247 (LKDILGFTLMLIPLLTLTFFS), 289-309 (LGGVLALAASVLILFLTPLLH), 321-341 (FSQVLFWLLVANLLILTWVGS), and 348-368 (FIAIGQMASFTYFLILLVLFP).

The protein belongs to the cytochrome b family. The cytochrome bc1 complex contains 11 subunits: 3 respiratory subunits (MT-CYB, CYC1 and UQCRFS1), 2 core proteins (UQCRC1 and UQCRC2) and 6 low-molecular weight proteins (UQCRH/QCR6, UQCRB/QCR7, UQCRQ/QCR8, UQCR10/QCR9, UQCR11/QCR10 and a cleavage product of UQCRFS1). This cytochrome bc1 complex then forms a dimer. It depends on heme b as a cofactor.

It localises to the mitochondrion inner membrane. In terms of biological role, component of the ubiquinol-cytochrome c reductase complex (complex III or cytochrome b-c1 complex) that is part of the mitochondrial respiratory chain. The b-c1 complex mediates electron transfer from ubiquinol to cytochrome c. Contributes to the generation of a proton gradient across the mitochondrial membrane that is then used for ATP synthesis. The protein is Cytochrome b (MT-CYB) of Apteryx australis (Southern brown kiwi).